Consider the following 235-residue polypeptide: Small ribosomal subunit protein uS3 (235 aa).

The KH type-2 domain occupies 39–107 (VRSYVKKKLI…PAQVNISEIR (69 aa)).

It belongs to the universal ribosomal protein uS3 family. Part of the 30S ribosomal subunit. Forms a tight complex with proteins S10 and S14.

Functionally, binds the lower part of the 30S subunit head. Binds mRNA in the 70S ribosome, positioning it for translation. This is Small ribosomal subunit protein uS3 from Buchnera aphidicola subsp. Cinara cedri (strain Cc).